The primary structure comprises 225 residues: Ribonuclease 3 (225 aa).

Residues 5 to 127 (IDKLERKLGY…IIGAIYLDSD (123 aa)) form the RNase III domain. Glu40 is a binding site for Mg(2+). The active site involves Asp44. Asp113 and Glu116 together coordinate Mg(2+). Glu116 is an active-site residue. A DRBM domain is found at 154–224 (DPKTRLQEFL…AETALEQLTN (71 aa)).

This sequence belongs to the ribonuclease III family. In terms of assembly, homodimer. It depends on Mg(2+) as a cofactor.

The protein resides in the cytoplasm. The catalysed reaction is Endonucleolytic cleavage to 5'-phosphomonoester.. Digests double-stranded RNA. Involved in the processing of primary rRNA transcript to yield the immediate precursors to the large and small rRNAs (23S and 16S). Processes some mRNAs, and tRNAs when they are encoded in the rRNA operon. Processes pre-crRNA and tracrRNA of type II CRISPR loci if present in the organism. This is Ribonuclease 3 from Vibrio campbellii (strain ATCC BAA-1116).